The chain runs to 358 residues: Fructose-bisphosphate aldolase class 2 (358 aa).

Residue serine 61 coordinates D-glyceraldehyde 3-phosphate. Residue aspartate 109 is the Proton donor of the active site. Zn(2+)-binding residues include histidine 110, aspartate 144, glutamate 174, and histidine 226. Glycine 227 is a dihydroxyacetone phosphate binding site. Histidine 264 contributes to the Zn(2+) binding site. Dihydroxyacetone phosphate contacts are provided by residues 265–267 and 286–289; these read GGS and NIDT.

This sequence belongs to the class II fructose-bisphosphate aldolase family. Zn(2+) is required as a cofactor.

The enzyme catalyses beta-D-fructose 1,6-bisphosphate = D-glyceraldehyde 3-phosphate + dihydroxyacetone phosphate. It participates in carbohydrate degradation; glycolysis; D-glyceraldehyde 3-phosphate and glycerone phosphate from D-glucose: step 4/4. Its function is as follows. Catalyzes the aldol condensation of dihydroxyacetone phosphate (DHAP or glycerone-phosphate) with glyceraldehyde 3-phosphate (G3P) to form fructose 1,6-bisphosphate (FBP) in gluconeogenesis and the reverse reaction in glycolysis. In Buchnera aphidicola subsp. Acyrthosiphon pisum (strain APS) (Acyrthosiphon pisum symbiotic bacterium), this protein is Fructose-bisphosphate aldolase class 2 (fbaA).